A 1662-amino-acid chain; its full sequence is Cortactin-binding protein 2 (1662 aa).

5 disordered regions span residues 1–23 (MATD…AGAA), 203–222 (KKKT…RSTE), 361–440 (SHSD…LHPG), 454–479 (GNAN…PTSR), and 498–618 (RFTS…PSID). Residues 119-276 (KKMQERMSAQ…EQLKRGSDSK (158 aa)) are a coiled coil. Low complexity predominate over residues 386 to 396 (PSTDSTPDPTS). The segment covering 411 to 422 (QTPGIAPQNSQA) has biased composition (polar residues). Arginine 498 carries the asymmetric dimethylarginine modification. Polar residues predominate over residues 583 to 597 (TVASPPSSLPQGNRV). 6 ANK repeats span residues 709 to 739 (GRPT…DINY), 743 to 772 (DGHS…QINA), 776 to 805 (NGFT…NINH), 809 to 838 (GGQT…NRSV), 842 to 871 (DGWT…PACG), and 912 to 942 (EGWT…EPER). The interval 1450–1474 (GESGAWRKVNTSPRRKSGRFSLPTW) is disordered. Serine 1524 carries the phosphoserine modification. Disordered regions lie at residues 1580 to 1602 (SQKE…KSKT) and 1618 to 1662 (SKVT…KPNK). Residues 1582–1599 (KEVSPLSSHQTTECSNSK) are compositionally biased toward polar residues. A compositionally biased stretch (low complexity) spans 1624–1638 (SQNTKRSSSSSNTRQ). The segment covering 1639-1648 (IEINNNSKEN) has biased composition (polar residues). The span at 1649–1662 (WNLHKNEHLDKPNK) shows a compositional bias: basic and acidic residues.

Interacts with CTTN/cortactin SH3 domain. Interacts with STRN, STRN4/zinedin and MOB4/phocein; this interactions mediate the association with the STRIPAK core complex and may regulate dendritic spine distribution of the STRIPAK complex in hippocampal neurons. Activation of glutamate receptors weakens the interaction with STRN and STRN4.

It localises to the cytoplasm. It is found in the cell cortex. The protein localises to the cell projection. The protein resides in the dendritic spine. Its function is as follows. Regulates the dendritic spine distribution of CTTN/cortactin in hippocampal neurons, and thus controls dendritic spinogenesis and dendritic spine maintenance. Associates with the striatin-interacting phosphatase and kinase (STRIPAK) core complex to regulate dendritic spine distribution of the STRIPAK complex in hippocampal neurons. This Chlorocebus aethiops (Green monkey) protein is Cortactin-binding protein 2 (CTTNBP2).